A 479-amino-acid chain; its full sequence is Aldehyde dehydrogenase (479 aa).

190 to 195 (GSSKVG) is an NAD(+) binding site. Glutamate 212 acts as the Proton acceptor in catalysis. Cysteine 247 acts as the Nucleophile in catalysis.

It belongs to the aldehyde dehydrogenase family.

Its subcellular location is the plastid. The protein resides in the amyloplast. It localises to the chloroplast. The catalysed reaction is an aldehyde + NAD(+) + H2O = a carboxylate + NADH + 2 H(+). Oxidizes nonanal, propionaldehyde and acetaldehyde in vitro, in the following decreasing order of reactivity: nonanal, propionaldehyde, acetaldehyde. The protein is Aldehyde dehydrogenase (ALDH) of Craterostigma plantagineum (Blue gem).